The primary structure comprises 67 residues: Probable Sec-independent protein translocase protein TatE (67 aa).

The helical transmembrane segment at 4 to 21 (ISITKLLVIAALVVLLFG) threads the bilayer.

This sequence belongs to the TatA/E family. TatE subfamily.

The protein resides in the cell inner membrane. Part of the twin-arginine translocation (Tat) system that transports large folded proteins containing a characteristic twin-arginine motif in their signal peptide across membranes. TatE shares overlapping functions with TatA. The chain is Probable Sec-independent protein translocase protein TatE from Citrobacter rodentium (strain ICC168) (Citrobacter freundii biotype 4280).